We begin with the raw amino-acid sequence, 490 residues long: Cardiolipin synthase 1 (490 aa).

2 consecutive transmembrane segments (helical) span residues 9–29 (ILTI…FVII) and 42–62 (WAWL…YLFL). 2 consecutive PLD phosphodiesterase domains span residues 225-252 (MNNR…GDDY) and 403-430 (QNGF…DFRS). Residues His-230, Lys-232, Asp-237, His-408, Lys-410, and Asp-415 contribute to the active site.

Belongs to the phospholipase D family. Cardiolipin synthase subfamily.

It localises to the cell membrane. It carries out the reaction 2 a 1,2-diacyl-sn-glycero-3-phospho-(1'-sn-glycerol) = a cardiolipin + glycerol. Functionally, catalyzes the reversible phosphatidyl group transfer from one phosphatidylglycerol molecule to another to form cardiolipin (CL) (diphosphatidylglycerol) and glycerol. The protein is Cardiolipin synthase 1 (cls1) of Staphylococcus epidermidis (strain ATCC 35984 / DSM 28319 / BCRC 17069 / CCUG 31568 / BM 3577 / RP62A).